A 161-amino-acid chain; its full sequence is Ribosome maturation factor RimP (161 aa).

Belongs to the RimP family.

The protein resides in the cytoplasm. Functionally, required for maturation of 30S ribosomal subunits. This Rickettsia conorii (strain ATCC VR-613 / Malish 7) protein is Ribosome maturation factor RimP.